Here is a 32-residue protein sequence, read N- to C-terminus: Unknown protein from spot 206 of 2D-PAGE of etiolated coleoptile (32 aa).

This chain is Unknown protein from spot 206 of 2D-PAGE of etiolated coleoptile, found in Zea mays (Maize).